Here is a 347-residue protein sequence, read N- to C-terminus: 4-hydroxyproline 2-epimerase (347 aa).

Substrate is bound at residue Gln85. Ser93 acts as the Proton acceptor in catalysis. Substrate contacts are provided by residues Gly94–Ser95 and Asp251. Cys255 functions as the Proton donor in the catalytic mechanism. A substrate-binding site is contributed by Gly256 to Thr257.

It belongs to the proline racemase family.

The enzyme catalyses trans-4-hydroxy-L-proline = cis-4-hydroxy-D-proline. Functionally, catalyzes the epimerization of trans-4-hydroxy-L-proline (t4LHyp) to cis-4-hydroxy-D-proline (c4DHyp). May be involved in a degradation pathway of t4LHyp. Can also catalyze the epimerization of trans-3-hydroxy-L-proline (t3LHyp) to cis-3-hydroxy-D-proline (c3DHyp) in vitro. Displays no proline racemase activity. This Allorhizobium ampelinum (strain ATCC BAA-846 / DSM 112012 / S4) (Agrobacterium vitis (strain S4)) protein is 4-hydroxyproline 2-epimerase.